The following is a 538-amino-acid chain: Putative cysteine ligase BshC (538 aa).

A coiled-coil region spans residues 460 to 484 (KINEQIELLERMLKRNVEKKHEVEL).

It belongs to the BshC family.

Involved in bacillithiol (BSH) biosynthesis. May catalyze the last step of the pathway, the addition of cysteine to glucosamine malate (GlcN-Mal) to generate BSH. This Bacillus cereus (strain ZK / E33L) protein is Putative cysteine ligase BshC.